A 595-amino-acid polypeptide reads, in one-letter code: MNELIKHKLELLPDSPGCYIHKDKNGTIIYVGKAKNLKNRVRSYFHGSHNTKTELLVSEIEDFEYIVTGSNTEALLLEINLIQENKPKYNIRLKDDKSYPFIKITNEPYPRLLITRQVKKDGGLYFGPYPDSGAATEIKRLLDRLFPFKKCTNPANKVCFYYHLGQCKAHTICQTDQTYWDSLKEDVKNFLNGRDDKIVNELRDKMTKASELMEFERAAEYRDLIEGIGLLRTKQRVMNQDMQDRDIFGYYVDKGWMCVQVFFIRQGKLIQRDVNMFPYYNESEEDFLTYVGQFYQDNRHFIPKEIFIPRNIDETLVKAVVNTKIIKPQRGEKKQLVNLATKNARVSLQQKFDLLEKDIRKTHGAIENIGDLLNIPKPVRIEAFDNSNIQGTSPVAAMVVFVDGKPSKKDYRKFKIKTVIGPDDYASMREVIYRRYSRVMRDGLTPPDLIIIDGGQGQVNVARDVIENKLGLDIPIAGLQKNDKHQTHELLFGDPLEVIPLPRNSEEFFLLQRIQDEVHRFAITFHRQLRGKNTFSSKLNGIAGLGPKRKQLLMKHFKNLPNIQKASLDDIINCGIPKNVAENIQESLREEREKG.

One can recognise a GIY-YIG domain in the interval 14–91; that stretch reads DSPGCYIHKD…IQENKPKYNI (78 aa). Residues 196–231 enclose the UVR domain; that stretch reads DKIVNELRDKMTKASELMEFERAAEYRDLIEGIGLL.

Belongs to the UvrC family. In terms of assembly, interacts with UvrB in an incision complex.

Its subcellular location is the cytoplasm. Its function is as follows. The UvrABC repair system catalyzes the recognition and processing of DNA lesions. UvrC both incises the 5' and 3' sides of the lesion. The N-terminal half is responsible for the 3' incision and the C-terminal half is responsible for the 5' incision. The polypeptide is UvrABC system protein C (Streptococcus mutans serotype c (strain ATCC 700610 / UA159)).